Consider the following 252-residue polypeptide: Isoprenyl transferase (252 aa).

Residue aspartate 32 is part of the active site. A Mg(2+)-binding site is contributed by aspartate 32. Substrate is bound by residues 33–36, tryptophan 37, arginine 45, histidine 49, and 77–79; these read GNGR and STE. Catalysis depends on asparagine 80, which acts as the Proton acceptor. Substrate-binding positions include tryptophan 81, arginine 83, arginine 200, and 206–208; that span reads RLS. Glutamate 219 serves as a coordination point for Mg(2+).

It belongs to the UPP synthase family. In terms of assembly, homodimer. It depends on Mg(2+) as a cofactor.

Catalyzes the condensation of isopentenyl diphosphate (IPP) with allylic pyrophosphates generating different type of terpenoids. The polypeptide is Isoprenyl transferase (Listeria monocytogenes serotype 4b (strain F2365)).